The sequence spans 246 residues: NAD(P)H-quinone oxidoreductase subunit K (246 aa).

[4Fe-4S] cluster is bound by residues Cys-62, Cys-63, Cys-127, and Cys-158.

This sequence belongs to the complex I 20 kDa subunit family. In terms of assembly, NDH-1 can be composed of about 15 different subunits; different subcomplexes with different compositions have been identified which probably have different functions. Requires [4Fe-4S] cluster as cofactor.

The protein resides in the cellular thylakoid membrane. The enzyme catalyses a plastoquinone + NADH + (n+1) H(+)(in) = a plastoquinol + NAD(+) + n H(+)(out). The catalysed reaction is a plastoquinone + NADPH + (n+1) H(+)(in) = a plastoquinol + NADP(+) + n H(+)(out). Functionally, NDH-1 shuttles electrons from an unknown electron donor, via FMN and iron-sulfur (Fe-S) centers, to quinones in the respiratory and/or the photosynthetic chain. The immediate electron acceptor for the enzyme in this species is believed to be plastoquinone. Couples the redox reaction to proton translocation, and thus conserves the redox energy in a proton gradient. Cyanobacterial NDH-1 also plays a role in inorganic carbon-concentration. The chain is NAD(P)H-quinone oxidoreductase subunit K from Parasynechococcus marenigrum (strain WH8102).